The primary structure comprises 273 residues: Large ribosomal subunit protein uL2 (273 aa).

The segment at 221–273 is disordered; sequence RGTAMNPVDHPHGGGEGRNFGKHPVTPWGVQTKGKKTRHNKRTDKFIVRRRGK. The span at 253–273 shows a compositional bias: basic residues; sequence KGKKTRHNKRTDKFIVRRRGK.

This sequence belongs to the universal ribosomal protein uL2 family. In terms of assembly, part of the 50S ribosomal subunit. Forms a bridge to the 30S subunit in the 70S ribosome.

Its function is as follows. One of the primary rRNA binding proteins. Required for association of the 30S and 50S subunits to form the 70S ribosome, for tRNA binding and peptide bond formation. It has been suggested to have peptidyltransferase activity; this is somewhat controversial. Makes several contacts with the 16S rRNA in the 70S ribosome. The sequence is that of Large ribosomal subunit protein uL2 from Glaesserella parasuis serovar 5 (strain SH0165) (Haemophilus parasuis).